The chain runs to 663 residues: 4-hydroxy-3-methylbut-2-en-1-yl diphosphate synthase (flavodoxin) (663 aa).

[4Fe-4S] cluster-binding residues include C568, C571, C602, and E609.

It belongs to the IspG family. [4Fe-4S] cluster is required as a cofactor.

The enzyme catalyses (2E)-4-hydroxy-3-methylbut-2-enyl diphosphate + oxidized [flavodoxin] + H2O + 2 H(+) = 2-C-methyl-D-erythritol 2,4-cyclic diphosphate + reduced [flavodoxin]. The protein operates within isoprenoid biosynthesis; isopentenyl diphosphate biosynthesis via DXP pathway; isopentenyl diphosphate from 1-deoxy-D-xylulose 5-phosphate: step 5/6. Functionally, converts 2C-methyl-D-erythritol 2,4-cyclodiphosphate (ME-2,4cPP) into 1-hydroxy-2-methyl-2-(E)-butenyl 4-diphosphate. The sequence is that of 4-hydroxy-3-methylbut-2-en-1-yl diphosphate synthase (flavodoxin) from Leptospira borgpetersenii serovar Hardjo-bovis (strain L550).